The primary structure comprises 706 residues: MNESKPGDSQNLACVFCRKHDDCPNKYGEKKTKEKWNLTVHYYCLLMSSGIWQRGKEEEGVYGFLIEDIRKEVNRASKLKCCVCKKNGASIGCVAPRCKRSYHFPCGLQRECIFQFTGNFASFCWDHRPVQIITSNNYRESLPCTICLEFIEPIPSYNILRSPCCKNAWFHRDCLQVQAINAGVFFFRCTICNNSDIFQKEMLRMGIHIPEKDASWELEENAYQELLQHYERCDVRRCRCKEGRDYNAPDSKWEIKRCQCCGSSGTHLACSSLRSWEQNWECLECRGIIYNSGEFQKAKKHVLPNSNNVGITDCLLEESSPKLPRQSPGSQSKDLLRQGSKFRRNVSTLLIELGFQIKKKTKRLYINKANIWNSALDAFRNRNFNPSYAIEVAYVIENDNFGSEHPGSKQEFLSLLMQHLENSSLFEGSLSKNLSLNSQALKENLYYEAGKMLAISLVHGGPSPGFFSKTLFNCLVYGPENTQPILDDVSDFDVAQIIIRINTATTVADLKSIINECYNYLELIGCLRLITTLSDKYMLVKDILGYHVIQRVHTPFESFKQGLKTLGVLEKIQAYPEAFCSILCHKPESLSAKILSELFTVHTLPDVKALGFWNSYLQAVEDGKSTTTMEDILIFATGCSSIPPAGFKPTPSIECLHVDFPVGNKCNNCLAIPITNTYKEFQENMDFTIRNTLRLEKEESSHYIGH.

The C2HC pre-PHD-type zinc finger occupies asparagine 11–isoleucine 51. The segment at leucine 79–arginine 128 adopts a PHD-type 1 zinc-finger fold. Residues proline 143–asparagine 193 form a PHD-type 2; degenerate zinc finger. Residues arginine 237 to arginine 286 form a PHD-type 3 zinc finger. Positions isoleucine 371–glutamate 698 constitute an HECT domain.

As to expression, predominantly expressed in brain, liver, kidney, testes and ovary.

The protein resides in the nucleus. Its subcellular location is the nucleolus. It is found in the cytoplasm. The catalysed reaction is S-ubiquitinyl-[E2 ubiquitin-conjugating enzyme]-L-cysteine + [acceptor protein]-L-lysine = [E2 ubiquitin-conjugating enzyme]-L-cysteine + N(6)-ubiquitinyl-[acceptor protein]-L-lysine.. It functions in the pathway protein modification; protein ubiquitination. E3 ubiquitin-protein ligase which accepts ubiquitin from an E2 ubiquitin-conjugating enzyme in the form of a thioester and then directly transfers the ubiquitin to targeted substrates. Essential in early embryonic development to prevent apoptotic death. This Homo sapiens (Human) protein is G2/M phase-specific E3 ubiquitin-protein ligase (G2E3).